An 874-amino-acid chain; its full sequence is Trimodular acetylaranotin synthesis protein ataIMG (874 aa).

The aminotransferase ataI stretch occupies residues 1–339 (MANLSGLSNR…DSGLLRASSI (339 aa)). The disordered stretch occupies residues 20–39 (RFGFQTTQQAKPTESSKTPI). Polar residues predominate over residues 23-37 (FQTTQQAKPTESSKT). The O-methyltransferase ataM stretch occupies residues 340–668 (SYNSMVKGSS…QERTEAEWRT (329 aa)). D625 is a binding site for S-adenosyl-L-methionine. The segment at 669-874 (LAGRTGWEIR…VMEMGPQIGH (206 aa)) is glutathione S-transferase ataG. Residues 699 to 766 (KPLILAHELE…YLADRFDDGT (68 aa)) enclose the GST N-terminal domain. One can recognise a GST C-terminal domain in the interval 739-874 (DPETKAEVIV…VMEMGPQIGH (136 aa)).

It in the N-terminal section; belongs to the class-I pyridoxal-phosphate-dependent aminotransferase family. The protein in the 2nd section; belongs to the class I-like SAM-binding methyltransferase superfamily. Cation-independent O-methyltransferase family. This sequence in the C-terminal section; belongs to the GST superfamily. It depends on pyridoxal 5'-phosphate as a cofactor.

It carries out the reaction RX + glutathione = an S-substituted glutathione + a halide anion + H(+). The protein operates within mycotoxin biosynthesis. Its function is as follows. Trimodular acetylaranotin synthesis protein; part of the gene cluster that mediates the biosynthesis of acetylaranotin, a member of the epipolythiodioxopiperazine (ETP) class of toxins characterized by a disulfide-bridged cyclic dipeptide. The first step of acetylaranotin biosynthesis is performed by the NRPS ataP which produces diketopiperazine cyclo-L-Phe-L-Phe via the condensation of 2 phenylalanines (L-Phe). The ataC domain of ataTC then catalyzes the formation of bishydroxylation of cyclo-L-Phe-L-Phe. The glutathione S-transferase domain ataG in ataIMG further catalyzes the conjugation of two glutathiones to the bishydroxylated intermediate. Next, the dipeptidase ataJ removes the Glu residues. The following step is performed by the carbon sulfur lyase domain ataI of ataIMG which may convert the bis-cysteinyl adduct to yield an epidithiol intermediate. The ataT domain from ataTC then catalyzes the oxidation of the free dithiols, followed by a cyclization step catalyzed by the cytochrome P450 ataF. AtaF probably acts as an epoxidase to promote a dual epoxidation formation at C8 and C9 along with C8' and C9', followed by the spontaneous nucleophilic attack of the amide nitrogens N10 and N10' to yield an intermediate with the pyrrolidine partial structure. The final steps of acetylaranotin biosynthesis involve the acetylation and ring rearrangement of an epitetrathiodiketopiperazine intermediate to produce acetylaranotin. AtaH probably catalyzes the acetylation of epitetrathiodiketopiperazine to produce a diacetate and ataY is responsible for the formation of the dihydrooxepin moiety that converts the diacetate intermediate to acetylaranotin via acetylapoaranotin. Both enzymes could function independently in the absence of the other. The acetylaranotin bis-thiomethyltransferase ataS located outside of acetylaranotin gene cluster is the main thiomethyltransferase responsible for converting acetylaranotin and its related intermediates to their methylated forms. This Aspergillus terreus (strain NIH 2624 / FGSC A1156) protein is Trimodular acetylaranotin synthesis protein ataIMG.